The sequence spans 621 residues: Autonomous transposable element EN-1 mosaic protein (621 aa).

Disordered regions lie at residues Met-1–Arg-119, Tyr-428–Arg-447, Gln-498–Gln-530, and Arg-549–Glu-621. Polar residues-rich tracts occupy residues Glu-27–Leu-39 and Arg-47–Arg-61. A compositionally biased stretch (acidic residues) spans Ala-82–Ser-102. The span at Pro-570–Ala-594 shows a compositional bias: low complexity.

In terms of biological role, this protein has most probably three functions; the mutator (M) function, for excision and transposition; the suppressor (S) function, which inhibits residual gene activity of certain alleles in which inhibitor elements are integrated; an activator (A) function is proposed, because inactive SPM can be activated by a second SPM. The chain is Autonomous transposable element EN-1 mosaic protein from Zea mays (Maize).